The chain runs to 186 residues: GPI-anchored hemophore ARB_02741 (186 aa).

Residues 1–18 (MKFSQAVIALAAATVVSA) form the signal peptide. The region spanning 19–108 (QLPDVPQCSL…SSKPSEPSTS (90 aa)) is the CFEM domain. 4 cysteine pairs are disulfide-bonded: Cys26–Cys67, Cys30–Cys62, Cys40–Cys48, and Cys50–Cys83. Asp45 lines the heme pocket. The interval 89–159 (PVSIPPVEES…NTGVPTQSTP (71 aa)) is disordered. The span at 96–131 (EESSSKPSEPSTSEAPTASPTESTPAPTTPAPTGTG) shows a compositional bias: low complexity. Residues 132-144 (SPSGTGAPGGPSG) are compositionally biased toward gly residues. Positions 148 to 159 (FTNTGVPTQSTP) are enriched in polar residues. The GPI-anchor amidated glycine moiety is linked to residue Gly163. Residues 164–186 (AASGLSANIGGMGAAILAIAAYL) constitute a propeptide, removed in mature form.

Belongs to the RBT5 family. The GPI-anchor is attached to the protein in the endoplasmic reticulum and serves to target the protein to the cell surface. There, the glucosamine-inositol phospholipid moiety is cleaved off and the GPI-modified mannoprotein is covalently attached via its lipidless GPI glycan remnant to the 1,6-beta-glucan of the outer cell wall layer.

It localises to the secreted. The protein resides in the cell wall. The protein localises to the cell membrane. Its function is as follows. GPI-anchored cell wall protein involved in stabilizing the cell wall. In Arthroderma benhamiae (strain ATCC MYA-4681 / CBS 112371) (Trichophyton mentagrophytes), this protein is GPI-anchored hemophore ARB_02741.